We begin with the raw amino-acid sequence, 570 residues long: MLTDMEISSRASLTNVAELGAELGLLPEEMLLFGSTKAKVDLSVQQRLAGQSRGKLIIVTAVTPTPHGEGKTVTSIGLTQSLKAIGKKACACIRQPSMGPVFGVKGGAAGGGYAQVVPMQELNLHLTGDIHAVSSAHNLGAAAIAARLFHESRLGKVEFEAQSGQAFLDIDPAQIRWHRVLDHNDRCLRQVQVGLGENNGPVYESGFDITAASELMAILALSANLADMRARIGRLVLALNRQGQVISAEDLGVAGAMTAIMVDAIKPTLMQTLNGAPCLIHAGPFANIAHGNSSIIADDIALKLVDYVITEGGFGSDMGFEKFCNIKVRQSGQVPSAAVLVTTLKALKANSGIESDTDINTPDEIRLEAGFANLHWHINNVARYGIPVVVAINRFATDTEAELQWLINAVNQTAAFGCEVSDAFSQGEAGAIELAHTVVRAADTQSQFRLLYPDDASLEAKLSTLAEVGYGAAGISLSDEAKQQVREFTSLGYAHLPVCMAKTPLSISHDPIQKGVPKDFIVPIRALVLNAGAGFVTALVGNVMTMPGLGIKPGYLKIDIDEAGEIIGLG.

ATP is bound at residue Thr65–Thr72.

It belongs to the formate--tetrahydrofolate ligase family.

It catalyses the reaction (6S)-5,6,7,8-tetrahydrofolate + formate + ATP = (6R)-10-formyltetrahydrofolate + ADP + phosphate. Its pathway is one-carbon metabolism; tetrahydrofolate interconversion. The chain is Formate--tetrahydrofolate ligase from Shewanella putrefaciens (strain CN-32 / ATCC BAA-453).